A 261-amino-acid chain; its full sequence is Pimeloyl-[acyl-carrier protein] methyl ester esterase (261 aa).

The AB hydrolase-1 domain maps to His-15–Pro-243. Residues Trp-22, Ser-83 to Leu-84, and Phe-144 to Gln-148 each bind substrate. Catalysis depends on Ser-83, which acts as the Nucleophile. Active-site residues include Asp-208 and His-236. Residue His-236 coordinates substrate.

This sequence belongs to the AB hydrolase superfamily. Carboxylesterase BioH family. In terms of assembly, monomer.

It is found in the cytoplasm. The enzyme catalyses 6-carboxyhexanoyl-[ACP] methyl ester + H2O = 6-carboxyhexanoyl-[ACP] + methanol + H(+). The protein operates within cofactor biosynthesis; biotin biosynthesis. In terms of biological role, the physiological role of BioH is to remove the methyl group introduced by BioC when the pimeloyl moiety is complete. It allows to synthesize pimeloyl-ACP via the fatty acid synthetic pathway through the hydrolysis of the ester bonds of pimeloyl-ACP esters. This is Pimeloyl-[acyl-carrier protein] methyl ester esterase from Proteus mirabilis (strain HI4320).